Here is a 318-residue protein sequence, read N- to C-terminus: Na(+)-translocating NADH-quinone reductase subunit C (318 aa).

Residues 13–33 (WYIILFIFVLSLVAGTLLSSV) form a helical membrane-spanning segment. Thr281 is subject to FMN phosphoryl threonine.

It belongs to the NqrC family. In terms of assembly, composed of six subunits; NqrA, NqrB, NqrC, NqrD, NqrE and NqrF. Requires FMN as cofactor.

The protein localises to the cell inner membrane. The enzyme catalyses a ubiquinone + n Na(+)(in) + NADH + H(+) = a ubiquinol + n Na(+)(out) + NAD(+). NQR complex catalyzes the reduction of ubiquinone-1 to ubiquinol by two successive reactions, coupled with the transport of Na(+) ions from the cytoplasm to the periplasm. NqrA to NqrE are probably involved in the second step, the conversion of ubisemiquinone to ubiquinol. The chain is Na(+)-translocating NADH-quinone reductase subunit C from Chlamydia muridarum (strain MoPn / Nigg).